A 278-amino-acid chain; its full sequence is HTH-type transcriptional activator RhaS (278 aa).

In terms of domain architecture, HTH araC/xylS-type spans 174-272; the sequence is NLLLAWLEDH…NWSPRDIRQG (99 aa). DNA-binding regions (H-T-H motif) lie at residues 191–212 and 239–262; these read DAVA…KQQT and VTDI…HREF.

Binds DNA as a dimer.

The protein resides in the cytoplasm. Its function is as follows. Activates expression of the rhaBAD and rhaT operons. This is HTH-type transcriptional activator RhaS from Shigella boydii serotype 18 (strain CDC 3083-94 / BS512).